Reading from the N-terminus, the 155-residue chain is UPF0178 protein mlr0875 (155 aa).

This sequence belongs to the UPF0178 family.

This chain is UPF0178 protein mlr0875, found in Mesorhizobium japonicum (strain LMG 29417 / CECT 9101 / MAFF 303099) (Mesorhizobium loti (strain MAFF 303099)).